The following is a 138-amino-acid chain: Hexon-interlacing protein (138 aa).

Residues 100–127 (LLVLLAQLEALTQRLGELSKQVAQLREQ) are a coiled coil.

The protein belongs to the adenoviridae hexon-interlacing protein family. In terms of assembly, homotrimer. Interacts with hexon protein; this interaction tethers the hexons together. Self-interacts with adjacent proteins. Interacts with kinesin light chain KLC1; this interaction leads to capsid disruption at the nuclear pore complex during virus entry into host cell.

It localises to the virion. The protein resides in the host nucleus. Its function is as follows. Structural component of the virion that acts as a cement protein on the capsid exterior and forms triskelion structures consisting of three molecules that stabilize three hexon trimers at the center of each icosahedral facet and fixes the peripentonal hexons. Dispensable for assembly. During virus entry, recruits the anterograde motor kinesin-1 to the capsid docked at the nuclear pore complex thereby subjecting the docked capsid to a pulling force. The resulting tension leads to capsid disruption, dispersion of capsid fragments toward cell periphery and eventually viral DNA entry into the host nucleus. The protein is Hexon-interlacing protein of Human adenovirus B serotype 7 (HAdV-7).